The primary structure comprises 227 residues: MFLNEKVGAVIVAAGQSRRMGGQDKIFARLSGKPVLAHTLSVFQQSPEIDDIALVVSEHNLKKAKELVKEYNFSKVIAICSGGELRQDSVSSGLTALCDCGWVLIHDGARPLLDPVSIPEGLEAAKLCGSAVAAVPLKDTVKEISPEGLVEKTLPREKLISVQTPQVFRADIIQKAYRRVGITATDDAQLVEKLKLPVKIFSGAYANIKITTPEDLLMAEILLKKGR.

It belongs to the IspD/TarI cytidylyltransferase family. IspD subfamily.

It carries out the reaction 2-C-methyl-D-erythritol 4-phosphate + CTP + H(+) = 4-CDP-2-C-methyl-D-erythritol + diphosphate. It participates in isoprenoid biosynthesis; isopentenyl diphosphate biosynthesis via DXP pathway; isopentenyl diphosphate from 1-deoxy-D-xylulose 5-phosphate: step 2/6. Catalyzes the formation of 4-diphosphocytidyl-2-C-methyl-D-erythritol from CTP and 2-C-methyl-D-erythritol 4-phosphate (MEP). This chain is 2-C-methyl-D-erythritol 4-phosphate cytidylyltransferase, found in Dehalococcoides mccartyi (strain ATCC BAA-2266 / KCTC 15142 / 195) (Dehalococcoides ethenogenes (strain 195)).